The following is a 397-amino-acid chain: Serpin-Z7 (397 aa).

Position 2 is an N-acetylalanine (Ala-2). The segment at 344–368 is RCL; it reads GTKAGAATGDVIVDRSLPIRMDFVA.

Belongs to the serpin family. As to expression, highly expressed in endosperm, at intermediate level in embryo and at lower levels in roots.

In terms of biological role, inhibits chymotrypsin in vitro. This Hordeum vulgare (Barley) protein is Serpin-Z7 (PAZ7).